Reading from the N-terminus, the 313-residue chain is Olfactory receptor 5H15 (313 aa).

At 1–28 the chain is on the extracellular side; sequence MEEENATLLTEFVLTGFLYQPQWKIPLF. N5 carries an N-linked (GlcNAc...) asparagine glycan. The chain crosses the membrane as a helical span at residues 29–49; it reads LAFLVIYLITIMGNLGLIAVI. Topologically, residues 50–56 are cytoplasmic; that stretch reads WKDPHLH. Residues 57 to 77 form a helical membrane-spanning segment; sequence IPMYLLLGNLAFVDAWISSTV. The Extracellular portion of the chain corresponds to 78-98; sequence TPKMLNNFLAKSKMISLSECK. An intrachain disulfide couples C97 to C179. Residues 99 to 119 traverse the membrane as a helical segment; that stretch reads IQFFSIAIGVTTECFLLATMA. Topologically, residues 120-143 are cytoplasmic; that stretch reads YDRYVAICKPLLYPAIMTNGLCIR. The helical transmembrane segment at 144-164 threads the bilayer; the sequence is LLILSYIAGILHALIHEGFLF. Residues 165 to 195 lie on the Extracellular side of the membrane; sequence RLTFCNSNIVHHIYCDTIPLSKISCTDSSIN. Residues 196–216 traverse the membrane as a helical segment; the sequence is FLMVFIFSGSIQVFSIVTILI. The Cytoplasmic portion of the chain corresponds to 217-240; that stretch reads SYTFVLFTVLEKKSDKGVRKAFST. The chain crosses the membrane as a helical span at residues 241–261; sequence CGAHLFSVCLYYGPLLLMYVG. Residues 262 to 271 lie on the Extracellular side of the membrane; that stretch reads PASPQADGQN. A helical membrane pass occupies residues 272 to 292; it reads MVEPLFYTVIIPLLNPIIYSL. Over 293-313 the chain is Cytoplasmic; the sequence is RNKQVIVSFIKMLKRNVKVSY.

It belongs to the G-protein coupled receptor 1 family.

It is found in the cell membrane. Its function is as follows. Odorant receptor. The protein is Olfactory receptor 5H15 (OR5H15) of Homo sapiens (Human).